Consider the following 488-residue polypeptide: UDP-N-acetylmuramoyl-L-alanyl-D-glutamate--2,6-diaminopimelate ligase (488 aa).

UDP-N-acetyl-alpha-D-muramoyl-L-alanyl-D-glutamate is bound by residues Leu24, Ser26, and 41–43 (HQV). 113-119 (GTNGKTT) serves as a coordination point for ATP. UDP-N-acetyl-alpha-D-muramoyl-L-alanyl-D-glutamate contacts are provided by residues Asn154, 155-156 (TT), Ser182, Gln188, and Arg190. The residue at position 222 (Lys222) is an N6-carboxylysine. Meso-2,6-diaminopimelate contacts are provided by residues Arg386, 410–413 (DNPR), Gly461, and Glu465. The Meso-diaminopimelate recognition motif signature appears at 410–413 (DNPR).

It belongs to the MurCDEF family. MurE subfamily. Mg(2+) is required as a cofactor. Post-translationally, carboxylation is probably crucial for Mg(2+) binding and, consequently, for the gamma-phosphate positioning of ATP.

The protein localises to the cytoplasm. It carries out the reaction UDP-N-acetyl-alpha-D-muramoyl-L-alanyl-D-glutamate + meso-2,6-diaminopimelate + ATP = UDP-N-acetyl-alpha-D-muramoyl-L-alanyl-gamma-D-glutamyl-meso-2,6-diaminopimelate + ADP + phosphate + H(+). It functions in the pathway cell wall biogenesis; peptidoglycan biosynthesis. Catalyzes the addition of meso-diaminopimelic acid to the nucleotide precursor UDP-N-acetylmuramoyl-L-alanyl-D-glutamate (UMAG) in the biosynthesis of bacterial cell-wall peptidoglycan. This is UDP-N-acetylmuramoyl-L-alanyl-D-glutamate--2,6-diaminopimelate ligase from Haemophilus influenzae (strain PittGG).